A 563-amino-acid chain; its full sequence is Tripeptidyl-peptidase 1 (563 aa).

The first 19 residues, 1–19 (MGLQACLLGLFALILSGKC), serve as a signal peptide directing secretion. A propeptide spans 20–195 (SYSPEPDQRR…PEPQVTGTVG (176 aa)) (removed in mature form). Residues Cys111 and Cys122 are joined by a disulfide bond. A Peptidase S53 domain is found at 199–563 (GVTPSVIRKR…PALLKTLLNP (365 aa)). Residues Asn210 and Asn222 are each glycosylated (N-linked (GlcNAc...) asparagine). Catalysis depends on charge relay system residues Glu272 and Asp276. N-linked (GlcNAc...) asparagine glycans are attached at residues Asn286, Asn313, and Asn443. 2 disulfide bridges follow: Cys365/Cys526 and Cys522/Cys537. Ser475 serves as the catalytic Charge relay system. Ca(2+)-binding residues include Asp517 and Val518. The Ca(2+) site is built by Gly539, Gly541, and Asp543.

As to quaternary structure, monomer. Interacts with CLN5. Interacts with CLN3. Ca(2+) is required as a cofactor. Activated by autocatalytic proteolytical processing upon acidification. N-glycosylation is required for processing and activity.

The protein resides in the lysosome. It is found in the melanosome. The catalysed reaction is Release of an N-terminal tripeptide from a polypeptide, but also has endopeptidase activity.. In terms of biological role, lysosomal serine protease with tripeptidyl-peptidase I activity. May act as a non-specific lysosomal peptidase which generates tripeptides from the breakdown products produced by lysosomal proteinases. Requires substrates with an unsubstituted N-terminus. This chain is Tripeptidyl-peptidase 1 (TPP1), found in Macaca fascicularis (Crab-eating macaque).